Here is a 573-residue protein sequence, read N- to C-terminus: Proline--tRNA ligase (573 aa).

The protein belongs to the class-II aminoacyl-tRNA synthetase family. ProS type 1 subfamily. Homodimer.

The protein localises to the cytoplasm. It carries out the reaction tRNA(Pro) + L-proline + ATP = L-prolyl-tRNA(Pro) + AMP + diphosphate. In terms of biological role, catalyzes the attachment of proline to tRNA(Pro) in a two-step reaction: proline is first activated by ATP to form Pro-AMP and then transferred to the acceptor end of tRNA(Pro). As ProRS can inadvertently accommodate and process non-cognate amino acids such as alanine and cysteine, to avoid such errors it has two additional distinct editing activities against alanine. One activity is designated as 'pretransfer' editing and involves the tRNA(Pro)-independent hydrolysis of activated Ala-AMP. The other activity is designated 'posttransfer' editing and involves deacylation of mischarged Ala-tRNA(Pro). The misacylated Cys-tRNA(Pro) is not edited by ProRS. This Cupriavidus necator (strain ATCC 17699 / DSM 428 / KCTC 22496 / NCIMB 10442 / H16 / Stanier 337) (Ralstonia eutropha) protein is Proline--tRNA ligase.